Here is a 394-residue protein sequence, read N- to C-terminus: Obg-like ATPase 1 (394 aa).

An OBG-type G domain is found at 25–282 (LKIGIVGLPN…MAPDEAAKYC (258 aa)). Residues 34–39 (NVGKST), 56–60 (FCTIE), and 94–97 (DIAG) each bind ATP. Positions 38 and 58 each coordinate Mg(2+). GTP is bound at residue phenylalanine 129. ATP is bound by residues 230-231 (NL), leucine 231, and 263-265 (SGV). GTP is bound at residue 263-265 (SGV). A TGS domain is found at 303 to 386 (NLIYFFTAGP…QDGDIIFFKF (84 aa)).

It belongs to the TRAFAC class OBG-HflX-like GTPase superfamily. OBG GTPase family. YchF/OLA1 subfamily. Monomer (Potential). Interacts with CAR4/GAP1. Requires Mg(2+) as cofactor.

It is found in the cytoplasm. The protein localises to the cytosol. Activated by GAP1. Hydrolyzes ATP, and can also hydrolyze GTP with lower efficiency. Has lower affinity for GTP (Potential). Exhibits GTPase activity. Confers sensitivity to salinity stress by suppressing the anti-oxidation enzymatic activities and increasing lipid peroxidation thus leading to the accumulation of reactive oxygen species (ROS). Acts as a negative regulator of disease resistance against bacterial pathogen. The sequence is that of Obg-like ATPase 1 from Arabidopsis thaliana (Mouse-ear cress).